The primary structure comprises 511 residues: Vesicular acetylcholine transporter (511 aa).

The Cytoplasmic portion of the chain corresponds to 1–36 (MVVGQAKAAMGKISSAIGERSKRISGAMNEPLRKRK). A helical membrane pass occupies residues 37-57 (ILLVIVCIAMLLDNMLYMVIV). Over 58 to 108 (PIVPNYLETIRTYKLVYITIPSNGTNGSLLNSTQRAVLERNPNANEDIQIG) the chain is Lumenal, vesicle. Residues Asn-80, Asn-83, and Asn-88 are each glycosylated (N-linked (GlcNAc...) asparagine). Residues 109 to 129 (VLFASKAILQLLSNPFTGTFI) form a helical membrane-spanning segment. Residues 130–135 (DRVGYD) lie on the Cytoplasmic side of the membrane. A helical membrane pass occupies residues 136 to 156 (IPLLIGLTIMFFSTITFAFGE). Residues 157–165 (SYAILFAAR) are Lumenal, vesicle-facing. A helical transmembrane segment spans residues 166–186 (SLQGLGSAFADTSGIAMIADK). Topologically, residues 187-197 (YTEESERTQAL) are cytoplasmic. Residues 198 to 218 (GIALAFISFGSLVAPPFGGVL) traverse the membrane as a helical segment. The Lumenal, vesicle segment spans residues 219–225 (YQFAGKW). A helical transmembrane segment spans residues 226–246 (VPFLVLSFVCLLDGILLLMVV). The Cytoplasmic portion of the chain corresponds to 247–267 (TPFASRTRGNTLQGTPIHKLM). A helical transmembrane segment spans residues 268-288 (IDPYIAVVAGALTTCNIPLAF). Topologically, residues 289–306 (LEPTISNWMKKTMNASEW) are lumenal, vesicle. N-linked (GlcNAc...) asparagine glycosylation is present at Asn-302. A helical transmembrane segment spans residues 307 to 327 (QMGITWLPAFFPHILGVYITV). Residues 328–337 (KLAAKYPNYQ) lie on the Cytoplasmic side of the membrane. Residues 338–358 (WLYGAFGLVIIGVSSCTIPAC) form a helical membrane-spanning segment. Residues 359–363 (RNFEE) are Lumenal, vesicle-facing. The helical transmembrane segment at 364–384 (LIIPLCALCFGIALVDTALLP) threads the bilayer. Topologically, residues 385–400 (TLAFLVDIRYVSVYGS) are cytoplasmic. The helical transmembrane segment at 401–421 (VYAIADISYSVAYALGPIMAG) threads the bilayer. Residues 422–428 (QIVHDLG) lie on the Lumenal, vesicle side of the membrane. The chain crosses the membrane as a helical span at residues 429–449 (FVQLNLGMGLVNILYAPALLF). Over 450–511 (LRNVCQMKPS…VLSDQEGYSE (62 aa)) the chain is Cytoplasmic. The interval 486-511 (AKEPHGTSSGNHSVHAVLSDQEGYSE) is disordered.

Belongs to the major facilitator superfamily. Vesicular transporter family. As to expression, high expression in the electric lobe of the brain.

It localises to the membrane. In terms of biological role, involved in acetylcholine transport into synaptic vesicles. The polypeptide is Vesicular acetylcholine transporter (Torpedo torpedo (Common torpedo)).